Reading from the N-terminus, the 110-residue chain is Phosphoribosyl-ATP pyrophosphatase (110 aa).

The protein belongs to the PRA-PH family.

Its subcellular location is the cytoplasm. It catalyses the reaction 1-(5-phospho-beta-D-ribosyl)-ATP + H2O = 1-(5-phospho-beta-D-ribosyl)-5'-AMP + diphosphate + H(+). Its pathway is amino-acid biosynthesis; L-histidine biosynthesis; L-histidine from 5-phospho-alpha-D-ribose 1-diphosphate: step 2/9. In Teredinibacter turnerae (strain ATCC 39867 / T7901), this protein is Phosphoribosyl-ATP pyrophosphatase.